We begin with the raw amino-acid sequence, 416 residues long: Tyrosine--tRNA ligase (416 aa).

Tyrosine 34 contacts L-tyrosine. A 'HIGH' region motif is present at residues 39 to 48 (PTGDSLHIGH). Residues tyrosine 165 and glutamine 169 each coordinate L-tyrosine. Positions 227–231 (KFGKT) match the 'KMSKS' region motif. Position 230 (lysine 230) interacts with ATP. Residues 349–416 (KNIVEWLVDT…KKKYFLARVK (68 aa)) enclose the S4 RNA-binding domain.

This sequence belongs to the class-I aminoacyl-tRNA synthetase family. TyrS type 1 subfamily. In terms of assembly, homodimer.

The protein localises to the cytoplasm. The catalysed reaction is tRNA(Tyr) + L-tyrosine + ATP = L-tyrosyl-tRNA(Tyr) + AMP + diphosphate + H(+). Its function is as follows. Catalyzes the attachment of tyrosine to tRNA(Tyr) in a two-step reaction: tyrosine is first activated by ATP to form Tyr-AMP and then transferred to the acceptor end of tRNA(Tyr). In Ligilactobacillus salivarius (strain UCC118) (Lactobacillus salivarius), this protein is Tyrosine--tRNA ligase.